The primary structure comprises 467 residues: MSFSNLPPSSGRGSHADGASGRSMPPFPGSSSFTANNPSKGIHPNLTLKRSVQSFDESLDNKKPLPFSYASKVKLREKYLIVGFISSGTYGRVYKAKGRDGVGGDFAIKKFKPDKEGEKVEYTGLSQSAIREISLCTELNHPNVVRLVETILEDKCVYMVFEYTEHDLLQIIHHHTQPQRHAIPAPMVKSILFQLLNGLLYLHSQWVMHRDLKPANILVTSKGAVRIGDLGLARVFKKPLNSLFSGDKVVVTIWYRAPELLLGARHYTTAVDLWAVGCIFAELLSLRPIFKGEEAKMDSKKTVPFQRNQMLKIIEILGLPKKEKWPGLSSMPEFPQLQAMAMAPGSGHLHKPSNLEHWYHVCLKSGGYSGSSPAGSPGKEGFDLLSRLLEYDPEKRISAKEALNHPYFTTGTPVAKNCFEGFEGKYPNRRVSQDDNDIRSGSLPGTKRSGLPDDTLTSRAAKRAREM.

2 stretches are compositionally biased toward polar residues: residues 1–12 (MSFSNLPPSSGR) and 29–39 (GSSSFTANNPS). Residues 1-45 (MSFSNLPPSSGRGSHADGASGRSMPPFPGSSSFTANNPSKGIHPN) are disordered. A Protein kinase domain is found at 79 to 408 (YLIVGFISSG…AKEALNHPYF (330 aa)). ATP contacts are provided by residues 85–93 (ISSGTYGRV) and Lys-109. The active-site Proton acceptor is the Asp-211. Residues 426-467 (YPNRRVSQDDNDIRSGSLPGTKRSGLPDDTLTSRAAKRAREM) are disordered.

It belongs to the protein kinase superfamily. CMGC Ser/Thr protein kinase family. CDC2/CDKX subfamily. Component of the SRB8-11 complex, a regulatory module of the Mediator complex. Requires Mg(2+) as cofactor.

It localises to the nucleus. The catalysed reaction is L-seryl-[protein] + ATP = O-phospho-L-seryl-[protein] + ADP + H(+). It catalyses the reaction L-threonyl-[protein] + ATP = O-phospho-L-threonyl-[protein] + ADP + H(+). The enzyme catalyses [DNA-directed RNA polymerase] + ATP = phospho-[DNA-directed RNA polymerase] + ADP + H(+). Component of the SRB8-11 complex. The SRB8-11 complex is a regulatory module of the Mediator complex which is itself involved in regulation of basal and activated RNA polymerase II-dependent transcription. The SRB8-11 complex may be involved in the transcriptional repression of a subset of genes regulated by Mediator. It may inhibit the association of the Mediator complex with RNA polymerase II to form the holoenzyme complex. The SRB8-11 complex phosphorylates the C-terminal domain (CTD) of the largest subunit of RNA polymerase II. This chain is Serine/threonine-protein kinase SSN3 (SSN3), found in Coccidioides immitis (strain RS) (Valley fever fungus).